We begin with the raw amino-acid sequence, 326 residues long: Ribosomal large subunit pseudouridine synthase D (326 aa).

Residue Asp-144 is part of the active site.

It belongs to the pseudouridine synthase RluA family.

The protein localises to the cytoplasm. It carries out the reaction uridine(1911/1915/1917) in 23S rRNA = pseudouridine(1911/1915/1917) in 23S rRNA. Responsible for synthesis of pseudouridine from uracil at positions 1911, 1915 and 1917 in 23S ribosomal RNA. The polypeptide is Ribosomal large subunit pseudouridine synthase D (Borreliella burgdorferi (strain ATCC 35210 / DSM 4680 / CIP 102532 / B31) (Borrelia burgdorferi)).